The primary structure comprises 176 residues: ATP-dependent protease subunit HslV (176 aa).

Thr2 is an active-site residue. Residues Gly157, Cys160, and Thr163 each contribute to the Na(+) site.

Belongs to the peptidase T1B family. HslV subfamily. In terms of assembly, a double ring-shaped homohexamer of HslV is capped on each side by a ring-shaped HslU homohexamer. The assembly of the HslU/HslV complex is dependent on binding of ATP.

It localises to the cytoplasm. It carries out the reaction ATP-dependent cleavage of peptide bonds with broad specificity.. Allosterically activated by HslU binding. Functionally, protease subunit of a proteasome-like degradation complex believed to be a general protein degrading machinery. In Pseudomonas putida (strain ATCC 47054 / DSM 6125 / CFBP 8728 / NCIMB 11950 / KT2440), this protein is ATP-dependent protease subunit HslV.